The sequence spans 360 residues: tRNA (guanine-N(7)-)-methyltransferase (360 aa).

The disordered stretch occupies residues 1–32 (MTPPPPKRQKRDEYRKATAEAASQPGPSDVAE). S-adenosyl-L-methionine-binding positions include G99 and 122 to 123 (EI). Positions 177–196 (ADAASPVLSTDTEHTPTTLV) are disordered. A compositionally biased stretch (polar residues) spans 183 to 196 (VLSTDTEHTPTTLV). Residues 209–210 (NT) and C229 each bind S-adenosyl-L-methionine. D232 is an active-site residue. An S-adenosyl-L-methionine-binding site is contributed by 332 to 334 (TEE).

It belongs to the class I-like SAM-binding methyltransferase superfamily. TrmB family. Forms a complex with trm82.

It localises to the nucleus. It carries out the reaction guanosine(46) in tRNA + S-adenosyl-L-methionine = N(7)-methylguanosine(46) in tRNA + S-adenosyl-L-homocysteine. The protein operates within tRNA modification; N(7)-methylguanine-tRNA biosynthesis. Its function is as follows. Catalyzes the formation of N(7)-methylguanine at position 46 (m7G46) in tRNA. In Neosartorya fischeri (strain ATCC 1020 / DSM 3700 / CBS 544.65 / FGSC A1164 / JCM 1740 / NRRL 181 / WB 181) (Aspergillus fischerianus), this protein is tRNA (guanine-N(7)-)-methyltransferase (trm8).